A 1441-amino-acid chain; its full sequence is Lysophospholipase NTE1 (1441 aa).

The Lumenal segment spans residues 1 to 22 (MWLTSYVLPRLKNILLLQFHIT). Residues 23-43 (LPLNYLVLLLLSTVIITYLFL) form a helical membrane-spanning segment. Residues 44–1441 (RTRILSNYSQ…ENMLQRRNSI (1398 aa)) are Cytoplasmic-facing. Disordered regions lie at residues 154–173 (SNPSGDAAANATAFEPPSND), 210–236 (THLNEGTHPSTTNNTPGPGSPNLTGEI), 376–445 (QDDT…NSSS), and 551–585 (NRTGGKMASHSKRLNGSSRSNSRTDRSESFDHFRN). Over residues 376-388 (QDDTGSSASTIQK) the composition is skewed to polar residues. Residues 572–585 (SRTDRSESFDHFRN) show a composition bias toward basic and acidic residues. A nucleoside 3',5'-cyclic phosphate is bound by residues 592 to 718 (NQFS…LTNS) and 707 to 836 (IYLK…VAKK). The PNPLA domain occupies 1137-1301 (LVLGGGGARG…VDNLPVTEMT (165 aa)). The GXGXXG signature appears at 1141 to 1146 (GGGARG). The GXSXG signature appears at 1168 to 1172 (GTSIG). S1170 serves as the catalytic Nucleophile. The active-site Proton acceptor is D1288. The DGA/G signature appears at 1288 to 1290 (DGG).

The protein belongs to the NTE family.

Its subcellular location is the endoplasmic reticulum membrane. The catalysed reaction is a 1-acyl-sn-glycero-3-phosphocholine + H2O = sn-glycerol 3-phosphocholine + a fatty acid + H(+). With respect to regulation, inhibited by organophosphorus esters. In terms of biological role, intracellular phospholipase B that catalyzes the double deacylation of phosphatidylcholine (PC) to glycerophosphocholine (GroPCho). Plays an important role in membrane lipid homeostasis. Responsible for the rapid PC turnover in response to inositol, elevated temperatures, or when choline is present in the growth medium. This is Lysophospholipase NTE1 (NTE1) from Kluyveromyces lactis (strain ATCC 8585 / CBS 2359 / DSM 70799 / NBRC 1267 / NRRL Y-1140 / WM37) (Yeast).